The sequence spans 346 residues: Holliday junction branch migration complex subunit RuvB (346 aa).

Over residues Met1–Ala11 the composition is skewed to polar residues. The segment at Met1–Ala20 is disordered. Residues Met1–Tyr183 are large ATPase domain (RuvB-L). Residues Ile22, Arg23, Gly64, Lys67, Thr68, Thr69, Glu130–Phe132, Arg173, Tyr183, and Arg220 each bind ATP. Thr68 contributes to the Mg(2+) binding site. The small ATPAse domain (RuvB-S) stretch occupies residues Ser184–Lys254. Positions Pro257–Phe346 are head domain (RuvB-H). The DNA site is built by Arg293, Arg312, and Arg317.

It belongs to the RuvB family. Homohexamer. Forms an RuvA(8)-RuvB(12)-Holliday junction (HJ) complex. HJ DNA is sandwiched between 2 RuvA tetramers; dsDNA enters through RuvA and exits via RuvB. An RuvB hexamer assembles on each DNA strand where it exits the tetramer. Each RuvB hexamer is contacted by two RuvA subunits (via domain III) on 2 adjacent RuvB subunits; this complex drives branch migration. In the full resolvosome a probable DNA-RuvA(4)-RuvB(12)-RuvC(2) complex forms which resolves the HJ.

The protein resides in the cytoplasm. The enzyme catalyses ATP + H2O = ADP + phosphate + H(+). Functionally, the RuvA-RuvB-RuvC complex processes Holliday junction (HJ) DNA during genetic recombination and DNA repair, while the RuvA-RuvB complex plays an important role in the rescue of blocked DNA replication forks via replication fork reversal (RFR). RuvA specifically binds to HJ cruciform DNA, conferring on it an open structure. The RuvB hexamer acts as an ATP-dependent pump, pulling dsDNA into and through the RuvAB complex. RuvB forms 2 homohexamers on either side of HJ DNA bound by 1 or 2 RuvA tetramers; 4 subunits per hexamer contact DNA at a time. Coordinated motions by a converter formed by DNA-disengaged RuvB subunits stimulates ATP hydrolysis and nucleotide exchange. Immobilization of the converter enables RuvB to convert the ATP-contained energy into a lever motion, pulling 2 nucleotides of DNA out of the RuvA tetramer per ATP hydrolyzed, thus driving DNA branch migration. The RuvB motors rotate together with the DNA substrate, which together with the progressing nucleotide cycle form the mechanistic basis for DNA recombination by continuous HJ branch migration. Branch migration allows RuvC to scan DNA until it finds its consensus sequence, where it cleaves and resolves cruciform DNA. In Xanthomonas campestris pv. campestris (strain 8004), this protein is Holliday junction branch migration complex subunit RuvB.